The following is a 369-amino-acid chain: Phospho-N-acetylmuramoyl-pentapeptide-transferase (369 aa).

A run of 10 helical transmembrane segments spans residues 2 to 22, 54 to 74, 80 to 100, 113 to 133, 158 to 178, 195 to 215, 241 to 261, 268 to 288, 293 to 313, and 347 to 367; these read IAIL…TPFF, GLVI…FLGL, GLLV…DDIL, FYKV…TFLV, ALFS…LLWI, LDGL…VIGF, PLDM…FLWW, IMMG…LSIL, LLFL…ILQI, and FWII…ADWL.

The protein belongs to the glycosyltransferase 4 family. MraY subfamily. It depends on Mg(2+) as a cofactor.

Its subcellular location is the cell membrane. The enzyme catalyses UDP-N-acetyl-alpha-D-muramoyl-L-alanyl-gamma-D-glutamyl-meso-2,6-diaminopimeloyl-D-alanyl-D-alanine + di-trans,octa-cis-undecaprenyl phosphate = di-trans,octa-cis-undecaprenyl diphospho-N-acetyl-alpha-D-muramoyl-L-alanyl-D-glutamyl-meso-2,6-diaminopimeloyl-D-alanyl-D-alanine + UMP. It participates in cell wall biogenesis; peptidoglycan biosynthesis. Its function is as follows. Catalyzes the initial step of the lipid cycle reactions in the biosynthesis of the cell wall peptidoglycan: transfers peptidoglycan precursor phospho-MurNAc-pentapeptide from UDP-MurNAc-pentapeptide onto the lipid carrier undecaprenyl phosphate, yielding undecaprenyl-pyrophosphoryl-MurNAc-pentapeptide, known as lipid I. The chain is Phospho-N-acetylmuramoyl-pentapeptide-transferase from Tropheryma whipplei (strain Twist) (Whipple's bacillus).